Reading from the N-terminus, the 284-residue chain is MATVTAALVKELRERTAAGMMDCKKALVEADGDIELAIDNMRKSGAAKAAKKSGNIAAEGTIIIKEVDGIAAILEVNCQTDFVAKDASFLAFANEVADAALAGRVEVAELQAAFEEKRIALVTKIGENISIRRVEFIEGAQIGSYRHGDRIGVVVVVVASDADQETIKQVAMHVAASKPEFVTPEDVPADVVAKEKQIQIDIAIQSGKPAEIAEKMVVGRMKKFTGEVSLTGQAFIMDPAQTVGQMLKAKGATVTNFIRFEVGEGIEKAKEMSFAEEVAAVQKG.

The segment at 80 to 83 is involved in Mg(2+) ion dislocation from EF-Tu; it reads TDFV.

The protein belongs to the EF-Ts family.

The protein localises to the cytoplasm. Its function is as follows. Associates with the EF-Tu.GDP complex and induces the exchange of GDP to GTP. It remains bound to the aminoacyl-tRNA.EF-Tu.GTP complex up to the GTP hydrolysis stage on the ribosome. This Photobacterium profundum (strain SS9) protein is Elongation factor Ts.